The sequence spans 602 residues: RecBCD enzyme subunit RecD (602 aa).

171-178 (GGPGTGKT) contacts ATP.

The protein belongs to the RecD family. As to quaternary structure, heterotrimer of RecB, RecC and RecD. All subunits contribute to DNA-binding.

The enzyme catalyses Couples ATP hydrolysis with the unwinding of duplex DNA at the replication fork by translocating in the 5'-3' direction. This creates two antiparallel DNA single strands (ssDNA). The leading ssDNA polymer is the template for DNA polymerase III holoenzyme which synthesizes a continuous strand.. The catalysed reaction is ATP + H2O = ADP + phosphate + H(+). Its function is as follows. A helicase/nuclease that prepares dsDNA breaks (DSB) for recombinational DNA repair. Binds to DSBs and unwinds DNA via a highly rapid and processive ATP-dependent bidirectional helicase activity. Unwinds dsDNA until it encounters a Chi (crossover hotspot instigator) sequence from the 3' direction. Cuts ssDNA a few nucleotides 3' to the Chi site. The properties and activities of the enzyme are changed at Chi. The Chi-altered holoenzyme produces a long 3'-ssDNA overhang and facilitates RecA-binding to the ssDNA for homologous DNA recombination and repair. Holoenzyme degrades any linearized DNA that is unable to undergo homologous recombination. In the holoenzyme this subunit has ssDNA-dependent ATPase and 5'-3' helicase activity. When added to pre-assembled RecBC greatly stimulates nuclease activity and augments holoenzyme processivity. Negatively regulates the RecA-loading ability of RecBCD. This Buchnera aphidicola subsp. Acyrthosiphon pisum (strain APS) (Acyrthosiphon pisum symbiotic bacterium) protein is RecBCD enzyme subunit RecD.